A 447-amino-acid chain; its full sequence is Sensor protein VanSB (447 aa).

2 helical membrane-spanning segments follow: residues 10 to 30 (VFSY…TLFA) and 137 to 155 (GIVM…AYIF). The 52-residue stretch at 157 to 208 (RQMTTPIKALADSANKMANLKEVPPPLERKDELGALAHDMHSMYIRLKETIA) folds into the HAMP domain. The 216-residue stretch at 230-445 (AASHELKTPI…LFWLDLPPTS (216 aa)) folds into the Histidine kinase domain. The residue at position 233 (H233) is a Phosphohistidine; by autocatalysis.

The protein resides in the cell membrane. It carries out the reaction ATP + protein L-histidine = ADP + protein N-phospho-L-histidine.. In terms of biological role, member of the two-component regulatory system VanSB/VanRB. Activates the transcription of vanSB, vanYB and vanW in response to vancomycin which results in vancomycin resistance. VanSB may activate VanRB by phosphorylation. May also act as a phospho-VanRB phosphatase. This is Sensor protein VanSB (vanSB) from Enterococcus faecalis (strain ATCC 700802 / V583).